The primary structure comprises 551 residues: Cysteine desulfurase SufS (551 aa).

The N-terminal stretch at 1-22 (MRPSSAAWICLLLRIANYTCYS) is a signal peptide. Lys327 is subject to N6-(pyridoxal phosphate)lysine. Residue Cys500 is the Cysteine persulfide intermediate of the active site.

This sequence belongs to the class-V pyridoxal-phosphate-dependent aminotransferase family. Csd subfamily. Monomer. Interacts with SufE; interaction enhances cysteine desulfurase activity of SufS. Requires pyridoxal 5'-phosphate as cofactor.

The protein resides in the plastid. It is found in the apicoplast. The enzyme catalyses (sulfur carrier)-H + L-cysteine = (sulfur carrier)-SH + L-alanine. The protein operates within cofactor biosynthesis; iron-sulfur cluster biosynthesis. Functionally, catalyzes sulfur activation and mobilization in sulfur mobilization (SUF) pathway for iron-sulfur (Fe-S) cluster biogenesis. Active when in complex with a partner protein SufE. Required for apicoplast maintenance. Plays a role in the development of sporozoites in oocysts in mosquitoes. The chain is Cysteine desulfurase SufS from Plasmodium vivax.